We begin with the raw amino-acid sequence, 514 residues long: Membrane-bound lytic murein transglycosylase F (514 aa).

Positions 1-30 (MKKLKINYLFIGILTLLLAAALWPSIPWFG) are cleaved as a signal peptide. The segment at 31 to 269 (KTENHIAAIQ…RIEEKYLGHG (239 aa)) is non-LT domain. The interval 270-514 (DDFDYVDTRS…LFTPQKKEEK (245 aa)) is LT domain. The active site involves Glu314.

The protein in the N-terminal section; belongs to the bacterial solute-binding protein 3 family. This sequence in the C-terminal section; belongs to the transglycosylase Slt family.

Its subcellular location is the cell outer membrane. It carries out the reaction Exolytic cleavage of the (1-&gt;4)-beta-glycosidic linkage between N-acetylmuramic acid (MurNAc) and N-acetylglucosamine (GlcNAc) residues in peptidoglycan, from either the reducing or the non-reducing ends of the peptidoglycan chains, with concomitant formation of a 1,6-anhydrobond in the MurNAc residue.. Functionally, murein-degrading enzyme that degrades murein glycan strands and insoluble, high-molecular weight murein sacculi, with the concomitant formation of a 1,6-anhydromuramoyl product. Lytic transglycosylases (LTs) play an integral role in the metabolism of the peptidoglycan (PG) sacculus. Their lytic action creates space within the PG sacculus to allow for its expansion as well as for the insertion of various structures such as secretion systems and flagella. The chain is Membrane-bound lytic murein transglycosylase F from Salmonella paratyphi A (strain ATCC 9150 / SARB42).